The primary structure comprises 211 residues: FMN-dependent NADH:quinone oxidoreductase (211 aa).

FMN is bound by residues Ser10 and 16–18; that span reads STS.

This sequence belongs to the azoreductase type 1 family. In terms of assembly, homodimer. Requires FMN as cofactor.

The catalysed reaction is 2 a quinone + NADH + H(+) = 2 a 1,4-benzosemiquinone + NAD(+). It carries out the reaction N,N-dimethyl-1,4-phenylenediamine + anthranilate + 2 NAD(+) = 2-(4-dimethylaminophenyl)diazenylbenzoate + 2 NADH + 2 H(+). Functionally, quinone reductase that provides resistance to thiol-specific stress caused by electrophilic quinones. Also exhibits azoreductase activity. Catalyzes the reductive cleavage of the azo bond in aromatic azo compounds to the corresponding amines. In Frankia casuarinae (strain DSM 45818 / CECT 9043 / HFP020203 / CcI3), this protein is FMN-dependent NADH:quinone oxidoreductase.